The following is a 1088-amino-acid chain: Restriction of telomere capping protein 1 (1088 aa).

Positions 26-56 (NSSTPQSHEISPSSSLSSSRSKKQTSQYNTQ) are disordered. Low complexity predominate over residues 27-44 (SSTPQSHEISPSSSLSSS). WD repeat units lie at residues 131–170 (APNKLINVNTIKTFADTIATGLSNGVVSIYKISPNGQSKV), 176–215 (DHNRTINSLDFIESENQLLSGSQDGTIKLWDLRSSSTKPV), 222–266 (LHSD…GGKV), 275–314 (LHTGPALSLHIHPEKELVVTGGRDKRISIFNYGERQSRNT), 367–417 (DPTI…TFSS), 432–473 (IEDL…TTEE), and 502–546 (DKPQ…SSIP). A compositionally biased stretch (polar residues) spans 537–560 (DSATSSSSIPNMQVSSSRPKLTRN). Positions 537–597 (DSATSSSSIP…SPQYKKNNPP (61 aa)) are disordered. A compositionally biased stretch (low complexity) spans 561–572 (TSQTTQDSSSSQ). Over residues 582–593 (ASQTYSSPQYKK) the composition is skewed to polar residues. One copy of the WD 8 repeat lies at 631–671 (STPDGFTLVDVCLLNASVAASVGNNRTSQIWRLLAVSIQEE). A compositionally biased stretch (polar residues) spans 709-732 (AETTNSNFVESFKSTSTSGSQFGK). 3 disordered regions span residues 709 to 751 (AETT…GNLM), 764 to 829 (SATS…FSPP), and 844 to 871 (SLASSPKSVRGPSGVKSHISRSRPSPPV). Positions 769 to 794 (KFKEQERKEDESQKAQSIKDENERAS) are enriched in basic and acidic residues. A compositionally biased stretch (polar residues) spans 796 to 806 (HSKSAPISISS). An RING-type; degenerate zinc finger spans residues 1040-1083 (CVYCNEPCKGLAVTVGLKCGHHGHFGCLKEWFIEDQNTECPGGC).

Belongs to the WD repeat RTC1 family.

Its subcellular location is the vacuole. In terms of biological role, may be involved in a process influencing telomere capping. The polypeptide is Restriction of telomere capping protein 1 (RTC1) (Candida albicans (strain SC5314 / ATCC MYA-2876) (Yeast)).